Consider the following 64-residue polypeptide: PYLa/PGLa B (64 aa).

Positions 1 to 20 (MYKQIFLCLIIAALCATIMA) are cleaved as a signal peptide. Residues 21–35 (EASALADADDDDDKR) constitute a propeptide that is removed on maturation. Leucine amide is present on L59. The propeptide occupies 60–64 (GRRDS).

It belongs to the gastrin/cholecystokinin family. Magainin subfamily. In terms of tissue distribution, expressed by the skin glands. Synthesized in the stomach and stored in a novel granular multinucleated cell in the gastric mucosa. Stored as active, processed peptides in large granules within the granular gland secretions of the skin.

The protein resides in the secreted. In terms of biological role, PGLa and PGLa-H display a broad-spectrum of antibacterial activity against a range of Gram-positive and Gram-negative bacteria. PGLa also displays antifungal activity against C.albicans ATCC 14053. PGLa-H shows moderate antibacterial activity against the multidrug-resistant methicillin-resistant S.aureus (MRSA) but exhibits very little hemolytic activity. The sequence is that of PYLa/PGLa B (pgla-b) from Xenopus laevis (African clawed frog).